The sequence spans 235 residues: Kinetochore protein Spc25 (235 aa).

A coiled-coil region spans residues lysine 44–threonine 106. The disordered stretch occupies residues glutamate 193 to asparagine 216.

This sequence belongs to the SPC25 family. Component of the Ndc80 complex, which is composed of Ndc80, Nuf2 and Spc25.

Its subcellular location is the nucleus. The protein localises to the chromosome. The protein resides in the centromere. It localises to the kinetochore. Its function is as follows. Acts as a component of the essential kinetochore-associated Ndc80 complex, which is required for chromosome segregation and spindle checkpoint activity during meiosis and mitosis. Required for kinetochore integrity and the organization of stable microtubule binding sites in the outer plate of the kinetochore. Participates in SAC signaling that responds specifically to disruptions in spindle microtubule dynamics. The NDC80 complex synergistically enhances the affinity of the SKA1 complex for microtubules and may allow the NDC80 complex to track depolymerizing microtubules. The protein is Kinetochore protein Spc25 of Drosophila pseudoobscura pseudoobscura (Fruit fly).